Consider the following 256-residue polypeptide: Ribosomal RNA small subunit methyltransferase J (256 aa).

S-adenosyl-L-methionine is bound by residues 104–105 (RD), 120–121 (ER), 156–157 (SS), and Asp174.

Belongs to the methyltransferase superfamily. RsmJ family.

The protein localises to the cytoplasm. It catalyses the reaction guanosine(1516) in 16S rRNA + S-adenosyl-L-methionine = N(2)-methylguanosine(1516) in 16S rRNA + S-adenosyl-L-homocysteine + H(+). Its function is as follows. Specifically methylates the guanosine in position 1516 of 16S rRNA. This Yersinia pseudotuberculosis serotype O:3 (strain YPIII) protein is Ribosomal RNA small subunit methyltransferase J.